The sequence spans 186 residues: ATP-dependent protease subunit HslV (186 aa).

Residue Thr-14 is part of the active site. The Na(+) site is built by Ala-168, Cys-171, and Thr-174.

Belongs to the peptidase T1B family. HslV subfamily. A double ring-shaped homohexamer of HslV is capped on each side by a ring-shaped HslU homohexamer. The assembly of the HslU/HslV complex is dependent on binding of ATP.

The protein localises to the cytoplasm. It carries out the reaction ATP-dependent cleavage of peptide bonds with broad specificity.. With respect to regulation, allosterically activated by HslU binding. In terms of biological role, protease subunit of a proteasome-like degradation complex believed to be a general protein degrading machinery. This is ATP-dependent protease subunit HslV from Methylorubrum extorquens (strain CM4 / NCIMB 13688) (Methylobacterium extorquens).